A 421-amino-acid polypeptide reads, in one-letter code: Gamma-glutamyl phosphate reductase (421 aa).

It belongs to the gamma-glutamyl phosphate reductase family.

It localises to the cytoplasm. It catalyses the reaction L-glutamate 5-semialdehyde + phosphate + NADP(+) = L-glutamyl 5-phosphate + NADPH + H(+). It functions in the pathway amino-acid biosynthesis; L-proline biosynthesis; L-glutamate 5-semialdehyde from L-glutamate: step 2/2. Catalyzes the NADPH-dependent reduction of L-glutamate 5-phosphate into L-glutamate 5-semialdehyde and phosphate. The product spontaneously undergoes cyclization to form 1-pyrroline-5-carboxylate. The sequence is that of Gamma-glutamyl phosphate reductase from Shewanella pealeana (strain ATCC 700345 / ANG-SQ1).